The primary structure comprises 314 residues: uncharacterized protein (314 aa).

The next 10 membrane-spanning stretches (helical) occupy residues 4-23, 36-53, 68-90, 97-116, 131-153, 174-196, 200-222, 229-251, 261-283, and 290-309; these read FFIGDLLPIIVIMLLGYFSG, FNKLVLNYALPAALFVSI, TLVSLVVIVGCFFFSWFGCYKFF, AAVCALIAGSPTIGFLGFAV, VAIISIIVNAITIPIGLYLLNPS, PVVWAPVLATILVLVGVKIPAAW, FNLIAKANSGVAVFAAGLTLAAH, EIAYNTFLKLILMPLALLLVGMA, MMVLAGALPPAFSGIIIASRFNV, and ASLAVSVLGFVVTAPLWIYV.

Belongs to the auxin efflux carrier (TC 2.A.69) family.

It localises to the cell membrane. This is an uncharacterized protein from Escherichia coli O157:H7.